The primary structure comprises 65 residues: MNSGNPCCDPVTCKPRRGEHCVSGPCCRNCKFLNAGTICKRARGDDMNDYCTGISPDCPRNPWKG.

Positions 1-65 (MNSGNPCCDP…PDCPRNPWKG (65 aa)) constitute a Disintegrin domain. 4 cysteine pairs are disulfide-bonded: Cys7–Cys30, Cys21–Cys27, Cys26–Cys51, and Cys39–Cys58. The short motif at 43–45 (RGD) is the Cell attachment site element.

This sequence belongs to the disintegrin family. Dimeric disintegrin subfamily. As to quaternary structure, homodimer; disulfide-linked. Expressed by the venom gland.

The protein localises to the secreted. In terms of biological role, poor inhibitor of platelet aggregation. The disintegrin inhibits the adhesion of cells expressing the RGD-dependent integrin alpha-5/beta-1 (ITGA5/ITGB1) to immobilized fibronectin. Inhibition on alpha-2b/beta-3 (ITGA2B/ITGB3) is low. This chain is Disintegrin VLO4, found in Macrovipera lebetina obtusa (Levant blunt-nosed viper).